The sequence spans 506 residues: MESTAIVPKGPVVGSEDMEKAEVIASGSTDIISTTSTATTTAAIGSVQEESVKQEDVPMEGGEGEVEEEEGETRCICGELDTPDDSGFFIQCEQCSSWQHGYCVSITQDNAPDKYWCEQCRPELHQLFTTDTGEARSIYKPVQEKRRQSRRKARSAAASKSHAANEAEKSPRNTSNTDDNVDDIGDEEDEVEDEASAVALAKDGNTRSSRRRRRNSMDDASTDQYSLDPGDSDKKLLDRKRATFMAREEKQYQRMLEKALKESRRTSHQEDPESYENDADIYQGDTDNHNGTTRLQTDVMLTEGKPDSVTNDDMKESLRPSKEQSMEKTNDVEKEASQEKESSTGSAQDTEKTDEPILPLTSISSSEDDSRKASSRGSKRVSKPARKGNRTRRSNTSSDTNQNRRSADIGTDKPVKPRLPPQRTSLNEMRRRVSAILEFISRTQWELSEDQSDREEFVRFVENQHFVEKVDTIYNGYNESLSMMDDLTRELLLWEKKYSNNTNAIQ.

The segment at 49 to 71 is disordered; it reads EESVKQEDVPMEGGEGEVEEEEG. Over residues 62–71 the composition is skewed to acidic residues; it reads GEGEVEEEEG. A PHD-type zinc finger spans residues 72 to 123; it reads ETRCICGELDTPDDSGFFIQCEQCSSWQHGYCVSITQDNAPDKYWCEQCRPE. The tract at residues 138–425 is disordered; it reads IYKPVQEKRR…KPRLPPQRTS (288 aa). Position 174 is a phosphothreonine (Thr174). Ser175 carries the post-translational modification Phosphoserine. Thr177 bears the Phosphothreonine mark. Residues 179-195 show a composition bias toward acidic residues; sequence DNVDDIGDEEDEVEDEA. Residues Ser216 and Ser267 each carry the phosphoserine modification. Basic and acidic residues-rich tracts occupy residues 231 to 271 and 312 to 342; these read DSDK…HQED and DDMK…EKES. Over residues 373 to 393 the composition is skewed to basic residues; the sequence is ASSRGSKRVSKPARKGNRTRR. Positions 394–404 are enriched in polar residues; it reads SNTSSDTNQNR. A compositionally biased stretch (basic and acidic residues) spans 405–415; it reads RSADIGTDKPV.

Component of the RPD3C(L) complex composed of at least ASH1, CTI6, DEP1, PHO23, RPD3, RXT2, RXT3, SAP30, SDS3, SIN3, UME1 and UME6. Interacts with CYC8.

It is found in the nucleus. Functionally, component of the RPD3C(L) histone deacetylase complex (HDAC). Responsible for the deacetylation of lysine residues on the N-terminal part of the core histones (H2A, H2B, H3 and H4). Histone deacetylation gives a tag for epigenetic repression and plays an important role in transcriptional regulation, cell cycle progression and developmental events. CTI6 links the SAGA coactivator to the CYC8-TUP1 corepressor. Involved in transcription regulation of heme-regulated genes and required for GCN5 recruitment, histone H3 acetylation and SPT15/TBP binding to promoters. The sequence is that of Histone deacetylase complex subunit CTI6 (CTI6) from Saccharomyces cerevisiae (strain ATCC 204508 / S288c) (Baker's yeast).